The following is a 676-amino-acid chain: UvrABC system protein B (676 aa).

A Helicase ATP-binding domain is found at glutamate 26–valine 414. Residue glycine 39–threonine 46 coordinates ATP. Residues tyrosine 92 to valine 115 carry the Beta-hairpin motif. The 167-residue stretch at glutamine 432–methionine 598 folds into the Helicase C-terminal domain. Residues glutamate 636–glutamine 671 form the UVR domain.

This sequence belongs to the UvrB family. As to quaternary structure, forms a heterotetramer with UvrA during the search for lesions. Interacts with UvrC in an incision complex.

It localises to the cytoplasm. In terms of biological role, the UvrABC repair system catalyzes the recognition and processing of DNA lesions. A damage recognition complex composed of 2 UvrA and 2 UvrB subunits scans DNA for abnormalities. Upon binding of the UvrA(2)B(2) complex to a putative damaged site, the DNA wraps around one UvrB monomer. DNA wrap is dependent on ATP binding by UvrB and probably causes local melting of the DNA helix, facilitating insertion of UvrB beta-hairpin between the DNA strands. Then UvrB probes one DNA strand for the presence of a lesion. If a lesion is found the UvrA subunits dissociate and the UvrB-DNA preincision complex is formed. This complex is subsequently bound by UvrC and the second UvrB is released. If no lesion is found, the DNA wraps around the other UvrB subunit that will check the other stand for damage. This chain is UvrABC system protein B, found in Vibrio vulnificus (strain CMCP6).